The following is a 1213-amino-acid chain: Genetic suppressor element 1 (1213 aa).

The interval 1-154 (MKGMSHEPKS…GSRGSSSGRE (154 aa)) is disordered. A Phosphoserine modification is found at serine 10. The segment covering 15–33 (MLSTATRTTATVNPLTPSP) has biased composition (polar residues). Composition is skewed to low complexity over residues 51-63 (SAQA…FAAA) and 76-89 (GSSL…VSSP). A phosphoserine mark is found at serine 84 and serine 95. Residues 103–114 (VPMGPIIVPPGG) show a composition bias toward low complexity. Position 305 is an asymmetric dimethylarginine (arginine 305). A coiled-coil region spans residues 319-402 (HSERMSSLSA…REKELLAAKA (84 aa)). The interval 326-384 (LSAERLQMDEELRREREREREREREADREREKEREREQREKEREKELEREREKEREREL) is disordered. Basic and acidic residues predominate over residues 331 to 384 (LQMDEELRREREREREREREADREREKEREREQREKEREKELEREREKEREREL). The residue at position 433 (threonine 433) is a Phosphothreonine. N6-acetyllysine is present on lysine 496. Disordered stretches follow at residues 527–579 (LDLG…QHTV) and 630–719 (SEKA…TARG). Composition is skewed to basic and acidic residues over residues 537-560 (EAEH…REPP) and 630-643 (SEKA…EATP). The segment covering 648 to 657 (QPPPPPPPPR) has biased composition (pro residues). Over residues 681–700 (STQTILGQQRPSLSQATSFG) the composition is skewed to polar residues. Lysine 739 bears the N6-acetyllysine mark. 4 positions are modified to phosphoserine: serine 766, serine 826, serine 828, and serine 857. 3 disordered regions span residues 816-858 (RKRR…NNSP), 898-979 (LSAA…EAPG), and 1065-1118 (ELQS…PRRQ). Residues 847–858 (TRYSPDEMNNSP) show a composition bias toward polar residues. Threonine 905 is subject to Phosphothreonine. Serine 907 bears the Phosphoserine mark. Polar residues predominate over residues 1065-1081 (ELQSSSRVPLPQHNGQQ). The stretch at 1093–1197 (QEADQDSEED…ELDHLRKCLA (105 aa)) forms a coiled coil. Positions 1095-1112 (ADQDSEEDSEEDSEEEAE) are enriched in acidic residues. Residue serine 1099 is modified to Phosphoserine.

As to quaternary structure, may be a component of a BHC histone deacetylase complex that contains HDAC1, HDAC2, HMG20B/BRAF35, KDM1A, RCOR1/CoREST, PHF21A/BHC80, ZMYM2, ZNF217, ZMYM3, GSE1 and GTF2I.

The protein is Genetic suppressor element 1 (Gse1) of Mus musculus (Mouse).